The chain runs to 186 residues: uncharacterized protein (186 aa).

Residue asparagine 34 is glycosylated (N-linked (GlcNAc...) asparagine; by host). The next 3 membrane-spanning stretches (helical) occupy residues 47-67, 114-134, and 144-164; these read IGMVVSSLMLLLVYFCFATTF, ILETVGFGLLHLKIALVIVLL, and LEMIYNKIVYFDTIGFYTLFF.

The protein localises to the membrane. This is an uncharacterized protein from Acanthamoeba polyphaga mimivirus (APMV).